An 878-amino-acid polypeptide reads, in one-letter code: MPEIDARLREDVHQLGELLGDTIREQYGPAFLDKIERIRKGAKAARRGSAEGAQQLTATLDGLEESELLPVARAFNQFLNLANIAEQYHRIRRRRPNEPEPFENLALEELLGRLKDAGHAPGQLARQLAGLEIELVLTAHPTEVARRTLIQKYDAITAQLATKDHADLLPEERSRIQRRLQRLVAEVWHTDEIRKVRPTPVDEAKWGFAVIEHSLWEALPNVLRHVDEVLLRSTGERLPLSAAPLRFASWMGGDRDGNPNVTAGVTREVLLLARWMAADLYLRDIDRLAAELSMQEASPALLARVGDSAEPYRALLKQLRERLRLTRSWTHQALAGEVPAAEGVLEHNRDLVEPLQLCHESLHACGMGVIADGALLDCLRRAATFGLFLVRLDVRQDAGRHAAALSEITEYLELGSYAEWDEKTRLEFLLEELNSRRPLLPAHYQPSAETAEVLATCRAIAAAPPASLGSYVISMAGQPSDVLAVQLLLKESGVDWPMRVVPLFETLDDLDNAGPCMERLLTLPGYRSRLSGVQEVMIGYSDSAKDAGTLTAAWAQYRAQEKLVEICRHHEVELLLFHGRGGTVGRGGGPAHAAILSQPPGSVAGRFRVTEQGEMIRFKFGLPDIAEQNLNLYLAAVLEATLMPPPAPEPAWRAQMDRLAKDALHAYRRVVRDDPQFVEYFRLATPEQELGRLPLGSRPAKRREGGVESLRAIPWIFAWTQTRLMLPAWLGWETALLNAIERGEGALLGQMRERWPFFTTRIDMLEMVLAKADADIARLYDERLVPLELRPLGRRLRDLLSQAVRVVLGLTGQSLLLAHASETRESISVRNSYLDPLHLLQAELLARSRRCRGDACGGLEQALLVTVAGIAAGLRNTG.

Active-site residues include His140 and Lys545.

The protein belongs to the PEPCase type 1 family. The cofactor is Mg(2+).

The enzyme catalyses oxaloacetate + phosphate = phosphoenolpyruvate + hydrogencarbonate. In terms of biological role, forms oxaloacetate, a four-carbon dicarboxylic acid source for the tricarboxylic acid cycle. This Pseudomonas paraeruginosa (strain DSM 24068 / PA7) (Pseudomonas aeruginosa (strain PA7)) protein is Phosphoenolpyruvate carboxylase.